Here is a 775-residue protein sequence, read N- to C-terminus: GRIP and coiled-coil domain-containing protein 1 (775 aa).

Residues 13 to 61 (SKKDLLETIETQKKQLLQYQARLKDVVRAYKSLLKEKEALEASIKVLSV) are a coiled coil. Residues 84–93 (DDRCSTHSED) are compositionally biased toward basic and acidic residues. Disordered stretches follow at residues 84–153 (DDRC…AGGE) and 614–639 (GLPG…SDSL). 3 stretches are compositionally biased toward low complexity: residues 94-110 (STGT…LTST), 133-147 (ASWS…SGDG), and 629-638 (DPADTSSSDS). The stretch at 153–763 (EVDKRLHQLK…PEEKQVIMRL (611 aa)) forms a coiled coil. In terms of domain architecture, GRIP spans 713–763 (QSREGANLEYLKNIIYRFLTLPDSLGRQQTLTAILTILHFSPEEKQVIMRL).

It is found in the cytoplasm. The protein resides in the golgi apparatus membrane. Its function is as follows. Probably involved in maintaining Golgi structure. The chain is GRIP and coiled-coil domain-containing protein 1 (GCC1) from Homo sapiens (Human).